We begin with the raw amino-acid sequence, 403 residues long: Renin (403 aa).

The N-terminal stretch at 1-22 (MARCRMPRWGLLLVLWGSCTFG) is a signal peptide. Residues 23–65 (LPADTGAFRRIFLKKMPSIRESLKERGVDVAGLGAEWNQFTKR) constitute a propeptide, activation peptide. Asn70 is a glycosylation site (N-linked (GlcNAc...) asparagine). A Peptidase A1 domain is found at 85-400 (YYGEIGIGTP…DRHNNRIGFA (316 aa)). Asp103 is a catalytic residue. An intrachain disulfide couples Cys116 to Cys123. N-linked (GlcNAc...) asparagine glycosylation occurs at Asn140. Cysteines 279 and 283 form a disulfide. Asp288 is a catalytic residue. Cys322 and Cys359 are oxidised to a cystine.

Belongs to the peptidase A1 family. As to quaternary structure, interacts with ATP6AP2.

It is found in the secreted. The protein resides in the membrane. It carries out the reaction Cleavage of Leu-|-Xaa bond in angiotensinogen to generate angiotensin I.. Its activity is regulated as follows. Interaction with ATP6AP2 results in a 5-fold increased efficiency in angiotensinogen processing. Functionally, renin is a highly specific endopeptidase, whose only known function is to generate angiotensin I from angiotensinogen in the plasma, initiating a cascade of reactions that produce an elevation of blood pressure and increased sodium retention by the kidney. This is Renin (REN) from Canis lupus familiaris (Dog).